A 378-amino-acid chain; its full sequence is Protein RecA (378 aa).

Position 79 to 86 (79 to 86 (GPESSGKT)) interacts with ATP.

This sequence belongs to the RecA family.

Its subcellular location is the cytoplasm. Functionally, can catalyze the hydrolysis of ATP in the presence of single-stranded DNA, the ATP-dependent uptake of single-stranded DNA by duplex DNA, and the ATP-dependent hybridization of homologous single-stranded DNAs. It interacts with LexA causing its activation and leading to its autocatalytic cleavage. This chain is Protein RecA, found in Streptococcus equi subsp. zooepidemicus (strain MGCS10565).